The sequence spans 333 residues: Cap-specific mRNA (nucleoside-2'-O-)-methyltransferase (333 aa).

Tyr22 provides a ligand contact to mRNA. Residues Gln39, Tyr66, Gly68, Gly72, Asp95, Arg97, Val116, and Asp138 each coordinate S-adenosyl-L-methionine. The tract at residues Pro169–Val249 is binding to NPH-I. Residues Pro169 to Lys333 form a binding to Rap94 region. Catalysis depends on Lys175, which acts as the For methyltransferase activity. MRNA is bound by residues Arg177–Phe180, Asp182, Ser205–Glu207, and Glu233. The disordered stretch occupies residues Ser305–Lys333. The segment covering Arg311–Asn322 has biased composition (low complexity). The span at Arg323 to Lys333 shows a compositional bias: basic residues.

This sequence belongs to the class I-like SAM-binding methyltransferase superfamily. Poxvirus/kinetoplastid 2'-O-MTase family. Interacts with poly(A) polymerase catalytic subunit OPG063. Interacts with OPG109 and OPG123; these interactions might help linking transcription to capping and polyadenylation.

The protein resides in the virion. The enzyme catalyses a 5'-end (N(7)-methyl 5'-triphosphoguanosine)-ribonucleoside in mRNA + S-adenosyl-L-methionine = a 5'-end (N(7)-methyl 5'-triphosphoguanosine)-(2'-O-methyl-ribonucleoside) in mRNA + S-adenosyl-L-homocysteine + H(+). Displays methyltransferase, positive regulation of the poly(A) polymerase and transcription elongation activities. Involved in the modification of both mRNA ends and in intermediate and late gene positive transcription elongation. At the mRNAs 5' end, methylates the ribose 2' OH group of the first transcribed nucleotide, thereby producing a 2'-O-methylpurine cap. At the 3' end, functions as a processivity factor which stimulates the activity of the viral poly(A) polymerase OPG063 that creates mRNA's poly(A) tail. In the presence of OPG102, OPG063 does not dissociate from the RNA allowing tail elongation to around 250 adenylates. In Vaccinia virus (strain Western Reserve) (VACV), this protein is Cap-specific mRNA (nucleoside-2'-O-)-methyltransferase (OPG102).